A 1458-amino-acid polypeptide reads, in one-letter code: MTGSSPPLSCQQVDNTLHIPALSCRGGFDFSLLFEELILGILPLGIVLIIAPFRLYHLFWRQAKVVASWLLWAKITAWLALGIVQLVLAVYWARPAATRTQASIAANAIITVGFFILCLLSCAEHLRSTTPSFLLNIYLLFTLLFDIAKTRTLWLRSSGQTDETIAILTSVTVGIKFLLLILEAVEKRHILRKGQSGYPPEATAGIFNRSFFLWLNPLFRSGFSKILDVEDLFDLDKHLSSRRLYSTLETLWDKVPKKNPNTLLFISLKAFKWPLLSAVPPRACLAALNFCQPLLLHRSLAFATEPVNNHTNSIGYGLIGAYILVYIGMGVTMGQYQHMTYRTITMVRGGVVSMIYNKASRLGIKDADPAASLTLMSADIERIVQGWQTIHDIWGNAAEIALAIYLLERELGVACVVPVGVALVALIGCLITLSFVVARQAVWLEAIERRISSTASMLSSMKGIKMLGLKSAIMKSLHGLRLEELEISKKFRRLLVWNMALGWTTRIFAPIFALGAFYGIMHSRGKDSAFDMSTAYTSLSLFALLADPLLSLVMALMTFVGSIGSFSRIQEFLEKDDHVDCRLKPLHASYESFEPKAMVLVDDSDATETASDRSIHRGKSVYHDALTVKNATFAWNVEKEPVLKGLTISIARGSFTMIVGPSGCGKSTLLKAILGEVPCVNGEIRLSSDSIAFCDQIPWHMNATIRESIVAMSSFDKEWYASVVHACGLVQDFEQLPRGDETVIGSKGIALSGGQSQRIALARAVYARKDIVILDDAFSGLDAATEDYVFHSLVGIHGLLRKINSTIIVASSSAKRLPYADQIVVLDKMGYASEQGSLKALNAAGGYVSSFGLGSPEWKSEIDKPSVTDLAQPKILRPNRTEAIKEDPRRQSGDLSIYLYYIRSIGWLPTRLVLTDMTGIWVKWWAISNEEDPNGRTGYYLGIYAMLGAVGMLSLIIGCWEMVINMVPKSGESFHRKLLATVLNAPMSFFAATDSGSILNRFSQDLQLIDMELPVAAINTFATLILCLAQMILMGIASRYAAISFPLVILAVYSIQKVYLRTSRQLRFLDLEAKAPLYSHFSDCLNGLVTLRAFGWQPALEDKNFQLLDYSQRPFYLLYAIQRWLTLTLDMVVAAIAVILIVLVVTLRGTISAGDVGVALLNVILFSQSIKLLVTFWTNLETHIGSIVRIRSFTETVSSENLPTEKDDVPPNWPWGGDIEFKSVSAEYRPSEPVLGDVSLTIKSGEKVGICGRTGSGKTSLIMSLFRMVELSSGSIHIDGVDITKIPRQEIRSRINGVSQSPLLIKGSIRRNMDPNGSYAEKAIIEAIKSVGLYTKIQEKGGLDTDISEVFLSQGQQQLFCLARAILRPGKVLVLDEATSNVDAKTDEIMQRVIREKFCTHTILAVAHKLETILDYDKVVVLDAGRVVESGDPCTLLSTEGSYFSRLYASSMALAEEQ.

Helical transmembrane passes span 30 to 50 (FSLLFEELILGILPLGIVLII), 70 to 90 (LLWAKITAWLALGIVQLVLAV), 102 to 122 (ASIAANAIITVGFFILCLLSC), 128 to 148 (STTPSFLLNIYLLFTLLFDIA), and 165 to 185 (IAILTSVTVGIKFLLLILEAV). A glycan (N-linked (GlcNAc...) asparagine) is linked at N208. A helical transmembrane segment spans residues 273–295 (WPLLSAVPPRACLAALNFCQPLL). Residues 283 to 561 (ACLAALNFCQ…LVMALMTFVG (279 aa)) form the ABC transmembrane type-1 1 domain. An N-linked (GlcNAc...) asparagine glycan is attached at N309. Transmembrane regions (helical) follow at residues 314 to 334 (IGYGLIGAYILVYIGMGVTMG), 387 to 407 (WQTIHDIWGNAAEIALAIYLL), 411 to 431 (LGVACVVPVGVALVALIGCLI), 501 to 521 (LGWTTRIFAPIFALGAFYGIM), and 541 to 561 (LFALLADPLLSLVMALMTFVG). The ABC transporter 1 domain occupies 626–853 (LTVKNATFAW…AGGYVSSFGL (228 aa)). Residue N630 is glycosylated (N-linked (GlcNAc...) asparagine). An ATP-binding site is contributed by 660 to 667 (GPSGCGKS). N-linked (GlcNAc...) asparagine glycans are attached at residues N702, N804, and N879. One can recognise an ABC transmembrane type-1 2 domain in the interval 933 to 1182 (PNGRTGYYLG…LVTFWTNLET (250 aa)). The next 6 helical transmembrane spans lie at 940–960 (YLGIYAMLGAVGMLSLIIGCW), 978–998 (LLATVLNAPMSFFAATDSGSI), 1016–1036 (AAINTFATLILCLAQMILMGI), 1040–1060 (YAAISFPLVILAVYSIQKVYL), 1125–1145 (LTLTLDMVVAAIAVILIVLVV), and 1156–1176 (VGVALLNVILFSQSIKLLVTF). The 231-residue stretch at 1219–1449 (IEFKSVSAEY…EGSYFSRLYA (231 aa)) folds into the ABC transporter 2 domain. An ATP-binding site is contributed by 1252–1259 (GRTGSGKT). N1316 carries an N-linked (GlcNAc...) asparagine glycan.

It belongs to the ABC transporter superfamily. ABCC family. Conjugate transporter (TC 3.A.1.208) subfamily.

It localises to the cell membrane. Functionally, pleiotropic ABC efflux transporter that may be involved in A.fumigatus adaptation to azoles such as vorizonazole. The polypeptide is ABC multidrug transporter B (Aspergillus fumigatus (strain ATCC MYA-4609 / CBS 101355 / FGSC A1100 / Af293) (Neosartorya fumigata)).